The sequence spans 832 residues: Protein wech (832 aa).

A compositionally biased stretch (polar residues) spans 1 to 14; it reads MMELLSNNSVPQQM. Residues 1-42 are disordered; it reads MMELLSNNSVPQQMASSNAPSANNVAHSSTANGSGGGSVSSN. Residues 15–32 are compositionally biased toward low complexity; sequence ASSNAPSANNVAHSSTAN. Ser107 carries the post-translational modification Phosphoserine. 2 B box-type zinc fingers span residues 118 to 163 and 184 to 224; these read NSSI…IVSL and SGNF…YASI. Zn(2+)-binding residues include Cys123, Cys126, Cys145, His149, Cys189, His192, Cys211, and His216. Residues Ser470, Ser475, and Ser506 each carry the phosphoserine modification. NHL repeat units lie at residues 537-580, 584-627, 631-674, 680-722, and 727-770; these read SLSF…FNPD, KFKF…FTAS, LLKF…FDSE, QIVF…IDPD, and LSVK…FNQN.

Interacts with the head domain of rhea and the kinase domain of Ilk. Interacts with AGO1. Interacts with mei-P26. Expressed in ovarian germline stem cells (at protein level). Expressed ubiquitously in all epithelial cells during early stages of embryogenesis. Specifically expressed at epidermal muscle attachment site.

Its function is as follows. Vital for larval development. Plays a role in tumor formation. A crucial component for the physical link between integrins and the cytoskeleton in the epidermal muscle attachment sites. This Drosophila melanogaster (Fruit fly) protein is Protein wech (wech).